Consider the following 301-residue polypeptide: Ornithine carbamoyltransferase (301 aa).

Carbamoyl phosphate contacts are provided by residues 46–49 (STRT), glutamine 73, arginine 97, and 124–127 (HPCQ). L-ornithine-binding positions include asparagine 154, aspartate 218, and 222–223 (SM). Carbamoyl phosphate is bound by residues 258 to 259 (CL) and arginine 286.

Belongs to the aspartate/ornithine carbamoyltransferase superfamily. OTCase family.

The protein resides in the cytoplasm. The enzyme catalyses carbamoyl phosphate + L-ornithine = L-citrulline + phosphate + H(+). Its pathway is amino-acid biosynthesis; L-arginine biosynthesis; L-arginine from L-ornithine and carbamoyl phosphate: step 1/3. Functionally, reversibly catalyzes the transfer of the carbamoyl group from carbamoyl phosphate (CP) to the N(epsilon) atom of ornithine (ORN) to produce L-citrulline. The sequence is that of Ornithine carbamoyltransferase (argF) from Methanothermobacter thermautotrophicus (strain ATCC 29096 / DSM 1053 / JCM 10044 / NBRC 100330 / Delta H) (Methanobacterium thermoautotrophicum).